The chain runs to 195 residues: Probable chemoreceptor glutamine deamidase CheD 2 (195 aa).

The protein belongs to the CheD family.

The catalysed reaction is L-glutaminyl-[protein] + H2O = L-glutamyl-[protein] + NH4(+). Functionally, probably deamidates glutamine residues to glutamate on methyl-accepting chemotaxis receptors (MCPs), playing an important role in chemotaxis. The protein is Probable chemoreceptor glutamine deamidase CheD 2 of Burkholderia thailandensis (strain ATCC 700388 / DSM 13276 / CCUG 48851 / CIP 106301 / E264).